The following is a 1062-amino-acid chain: Carbamoyl phosphate synthase pyrimidine-specific large chain (1062 aa).

The interval methionine 1–glutamate 401 is carboxyphosphate synthetic domain. 12 residues coordinate ATP: arginine 129, arginine 169, glycine 175, glycine 176, lysine 208, isoleucine 210, glutamate 215, glycine 241, valine 242, histidine 243, glutamine 284, and glutamate 298. The ATP-grasp 1 domain maps to arginine 133–valine 327. Positions 284, 298, and 300 each coordinate Mg(2+). Mn(2+) contacts are provided by glutamine 284, glutamate 298, and asparagine 300. Residues alanine 402–serine 546 form an oligomerization domain region. A carbamoyl phosphate synthetic domain region spans residues glutamate 547 to glycine 929. In terms of domain architecture, ATP-grasp 2 spans glutamate 671 to leucine 861. ATP-binding residues include arginine 707, arginine 746, leucine 748, glutamate 752, glycine 777, valine 778, histidine 779, serine 780, glutamine 820, and glutamate 832. Mg(2+) is bound by residues glutamine 820, glutamate 832, and asparagine 834. Mn(2+) is bound by residues glutamine 820, glutamate 832, and asparagine 834. The region spanning methionine 930–glutamine 1062 is the MGS-like domain. The segment at methionine 930–glutamine 1062 is allosteric domain.

Belongs to the CarB family. Composed of two chains; the small (or glutamine) chain promotes the hydrolysis of glutamine to ammonia, which is used by the large (or ammonia) chain to synthesize carbamoyl phosphate. Tetramer of heterodimers (alpha,beta)4. Requires Mg(2+) as cofactor. Mn(2+) is required as a cofactor.

It carries out the reaction hydrogencarbonate + L-glutamine + 2 ATP + H2O = carbamoyl phosphate + L-glutamate + 2 ADP + phosphate + 2 H(+). The enzyme catalyses hydrogencarbonate + NH4(+) + 2 ATP = carbamoyl phosphate + 2 ADP + phosphate + 2 H(+). It functions in the pathway amino-acid biosynthesis; L-arginine biosynthesis; carbamoyl phosphate from bicarbonate: step 1/1. Its pathway is pyrimidine metabolism; UMP biosynthesis via de novo pathway; (S)-dihydroorotate from bicarbonate: step 1/3. Its function is as follows. Small subunit of the glutamine-dependent carbamoyl phosphate synthetase (CPSase). CPSase catalyzes the formation of carbamoyl phosphate from the ammonia moiety of glutamine, carbonate, and phosphate donated by ATP, constituting the first step of the biosynthetic pathway leading to pyrimidine nucleotides. The large subunit (synthetase) binds the substrates ammonia (free or transferred from glutamine from the small subunit), hydrogencarbonate and ATP and carries out an ATP-coupled ligase reaction, activating hydrogencarbonate by forming carboxy phosphate which reacts with ammonia to form carbamoyl phosphate. The sequence is that of Carbamoyl phosphate synthase pyrimidine-specific large chain (pyrAB) from Halalkalibacterium halodurans (strain ATCC BAA-125 / DSM 18197 / FERM 7344 / JCM 9153 / C-125) (Bacillus halodurans).